We begin with the raw amino-acid sequence, 373 residues long: UPF0725 protein At1g23950 (373 aa).

N-acetylthreonine is present on Thr2.

Belongs to the UPF0725 (EMB2204) family.

This is UPF0725 protein At1g23950 from Arabidopsis thaliana (Mouse-ear cress).